We begin with the raw amino-acid sequence, 410 residues long: 2-epi-5-epi-valiolone synthase (410 aa).

Residues D66, E97–K100, G130–D134, T154–T155, K167, K176, and F194–T197 contribute to the NAD(+) site. Residue K167 is part of the active site. Positions 209, 280, and 296 each coordinate a divalent metal cation.

This sequence belongs to the sugar phosphate cyclases superfamily. EEVS family. Requires NAD(+) as cofactor. The cofactor is Co(2+).

The enzyme catalyses D-sedoheptulose 7-phosphate = 2-epi-5-epi-valiolone + phosphate. In terms of biological role, catalyzes the cyclization of D-sedoheptulose 7-phosphate to 2-epi-5-epi-valiolone. Involved in salbostatin biosynthesis. The polypeptide is 2-epi-5-epi-valiolone synthase (Streptomyces albus (strain ATCC 21838 / DSM 41398 / FERM P-419 / JCM 4703 / NBRC 107858)).